The chain runs to 702 residues: Ribosomal RNA large subunit methyltransferase K/L (702 aa).

The THUMP domain occupies Leu-43 to Leu-154.

This sequence belongs to the methyltransferase superfamily. RlmKL family.

It is found in the cytoplasm. It carries out the reaction guanosine(2445) in 23S rRNA + S-adenosyl-L-methionine = N(2)-methylguanosine(2445) in 23S rRNA + S-adenosyl-L-homocysteine + H(+). It catalyses the reaction guanosine(2069) in 23S rRNA + S-adenosyl-L-methionine = N(2)-methylguanosine(2069) in 23S rRNA + S-adenosyl-L-homocysteine + H(+). Specifically methylates the guanine in position 2445 (m2G2445) and the guanine in position 2069 (m7G2069) of 23S rRNA. The protein is Ribosomal RNA large subunit methyltransferase K/L of Escherichia coli O6:K15:H31 (strain 536 / UPEC).